We begin with the raw amino-acid sequence, 216 residues long: Uracil phosphoribosyltransferase (216 aa).

Residues 29 to 30 (RK) and arginine 37 contribute to the CTP site. A GTP-binding site is contributed by 30-34 (KNLVR). Arginine 80 contacts 5-phospho-alpha-D-ribose 1-diphosphate. 87–96 (EGLLKAFPKA) provides a ligand contact to CTP. 5-phospho-alpha-D-ribose 1-diphosphate contacts are provided by residues arginine 105 and 140–148 (DPMIATAST). Uracil is bound by residues isoleucine 203 and 208–210 (GDA). Aspartate 209 contacts 5-phospho-alpha-D-ribose 1-diphosphate.

Belongs to the UPRTase family. Homotetramer. It depends on Mg(2+) as a cofactor.

The enzyme catalyses UMP + diphosphate = 5-phospho-alpha-D-ribose 1-diphosphate + uracil. It participates in pyrimidine metabolism; UMP biosynthesis via salvage pathway; UMP from uracil: step 1/1. With respect to regulation, allosterically activated by GTP. Inhibited by CTP and UMP in combination. Functionally, catalyzes the conversion of uracil and 5-phospho-alpha-D-ribose 1-diphosphate (PRPP) to UMP and diphosphate. The protein is Uracil phosphoribosyltransferase (upp) of Saccharolobus solfataricus (strain ATCC 35092 / DSM 1617 / JCM 11322 / P2) (Sulfolobus solfataricus).